Reading from the N-terminus, the 476-residue chain is Aspartyl/glutamyl-tRNA(Asn/Gln) amidotransferase subunit B (476 aa).

It belongs to the GatB/GatE family. GatB subfamily. As to quaternary structure, heterotrimer of A, B and C subunits.

The catalysed reaction is L-glutamyl-tRNA(Gln) + L-glutamine + ATP + H2O = L-glutaminyl-tRNA(Gln) + L-glutamate + ADP + phosphate + H(+). The enzyme catalyses L-aspartyl-tRNA(Asn) + L-glutamine + ATP + H2O = L-asparaginyl-tRNA(Asn) + L-glutamate + ADP + phosphate + 2 H(+). Functionally, allows the formation of correctly charged Asn-tRNA(Asn) or Gln-tRNA(Gln) through the transamidation of misacylated Asp-tRNA(Asn) or Glu-tRNA(Gln) in organisms which lack either or both of asparaginyl-tRNA or glutaminyl-tRNA synthetases. The reaction takes place in the presence of glutamine and ATP through an activated phospho-Asp-tRNA(Asn) or phospho-Glu-tRNA(Gln). In Clostridium botulinum (strain Kyoto / Type A2), this protein is Aspartyl/glutamyl-tRNA(Asn/Gln) amidotransferase subunit B.